A 327-amino-acid polypeptide reads, in one-letter code: 4-hydroxythreonine-4-phosphate dehydrogenase (327 aa).

H134 and T135 together coordinate substrate. A divalent metal cation-binding residues include H164, H209, and H264. The substrate site is built by K272, N281, and R290.

This sequence belongs to the PdxA family. Homodimer. Zn(2+) is required as a cofactor. Mg(2+) serves as cofactor. It depends on Co(2+) as a cofactor.

Its subcellular location is the cytoplasm. The enzyme catalyses 4-(phosphooxy)-L-threonine + NAD(+) = 3-amino-2-oxopropyl phosphate + CO2 + NADH. It functions in the pathway cofactor biosynthesis; pyridoxine 5'-phosphate biosynthesis; pyridoxine 5'-phosphate from D-erythrose 4-phosphate: step 4/5. In terms of biological role, catalyzes the NAD(P)-dependent oxidation of 4-(phosphooxy)-L-threonine (HTP) into 2-amino-3-oxo-4-(phosphooxy)butyric acid which spontaneously decarboxylates to form 3-amino-2-oxopropyl phosphate (AHAP). The protein is 4-hydroxythreonine-4-phosphate dehydrogenase of Shewanella frigidimarina (strain NCIMB 400).